The sequence spans 444 residues: Acyl-CoA 6-desaturase (444 aa).

Residues 1-21 (MGKGGNQGEGSTERQAPMPTF) form a disordered region. The Cytoplasmic segment spans residues 1 to 130 (MGKGGNQGEG…EDMNLFKTNH (130 aa)). Residues 18 to 95 (MPTFRWEEIQ…LKPLLIGELA (78 aa)) enclose the Cytochrome b5 heme-binding domain. Residues 131-151 (LFFFLLLSHIIVMESLAWFIL) form a helical membrane-spanning segment. Ser152 is a topological domain (lumenal). A helical membrane pass occupies residues 153–173 (YFGTGWIPTLVTAFVLATSQA). Over 174–264 (QAGWLQHDYG…KYLPYNHQHE (91 aa)) the chain is Cytoplasmic. The short motif at 180–184 (HDYGH) is the Histidine box-1 element. The short motif at 217–221 (HFQHH) is the Histidine box-2 element. Residues 265 to 285 (YFFLIGPPLLIPMYFQYQIIM) traverse the membrane as a helical segment. The Lumenal segment spans residues 286-305 (TMISRRDWVDLAWAISYYMR). Residues 306 to 326 (FFYTYIPFYGILGALVFLNFI) form a helical membrane-spanning segment. The Cytoplasmic segment spans residues 327-444 (RFLESHWFVW…ELWLDAYLHK (118 aa)). The Histidine box-3 motif lies at 382–386 (QIEHH).

This sequence belongs to the fatty acid desaturase type 1 family. Highly expressed in the adrenal gland, liver, brain, and testis, tissues where lipogenesis and steroidogenesis are active. Also detected in lung, heart, and skeletal muscle.

The protein resides in the endoplasmic reticulum membrane. It catalyses the reaction (9Z,12Z)-octadecadienoyl-CoA + 2 Fe(II)-[cytochrome b5] + O2 + 2 H(+) = (6Z,9Z,12Z)-octadecatrienoyl-CoA + 2 Fe(III)-[cytochrome b5] + 2 H2O. It carries out the reaction (9Z,12Z,15Z)-octadecatrienoyl-CoA + 2 Fe(II)-[cytochrome b5] + O2 + 2 H(+) = (6Z,9Z,12Z,15Z)-octadecatetraenoyl-CoA + 2 Fe(III)-[cytochrome b5] + 2 H2O. The catalysed reaction is (9Z,12Z,15Z,18Z,21Z)-tetracosapentaenoyl-CoA + 2 Fe(II)-[cytochrome b5] + O2 + 2 H(+) = (6Z,9Z,12Z,15Z,18Z,21Z)-tetracosahexaenoyl-CoA + 2 Fe(III)-[cytochrome b5] + 2 H2O. The enzyme catalyses (11E)-octadecenoyl-CoA + 2 Fe(II)-[cytochrome b5] + O2 + 2 H(+) = (6Z,11E)-octadecadienoyl-CoA + 2 Fe(III)-[cytochrome b5] + 2 H2O. It catalyses the reaction (11Z,14Z)-eicosadienoyl-CoA + 2 Fe(II)-[cytochrome b5] + O2 + 2 H(+) = (8Z,11Z,14Z)-eicosatrienoyl-CoA + 2 Fe(III)-[cytochrome b5] + 2 H2O. It carries out the reaction (11Z,14Z,17Z)-eicosatrienoyl-CoA + 2 Fe(II)-[cytochrome b5] + O2 + 2 H(+) = (8Z,11Z,14Z,17Z)-eicosatetraenoyl-CoA + 2 Fe(III)-[cytochrome b5] + 2 H2O. Its pathway is lipid metabolism; polyunsaturated fatty acid biosynthesis. Functionally, involved in the biosynthesis of highly unsaturated fatty acids (HUFA) from the essential polyunsaturated fatty acids (PUFA) linoleic acid (LA) (18:2n-6) and alpha-linolenic acid (ALA) (18:3n-3) precursors, acting as a fatty acyl-coenzyme A (CoA) desaturase that introduces a cis double bond at carbon 6 of the fatty acyl chain. Catalyzes the first and rate limiting step in this pathway which is the desaturation of LA (18:2n-6) and ALA (18:3n-3) into gamma-linoleate (GLA) (18:3n-6) and stearidonate (18:4n-3), respectively. Subsequently, in the biosynthetic pathway of HUFA n-3 series, it desaturates tetracosapentaenoate (24:5n-3) to tetracosahexaenoate (24:6n-3), which is then converted to docosahexaenoate (DHA)(22:6n-3), an important lipid for nervous system function. It can also desaturate (11E)-octadecenoate (trans-vaccenoate) at carbon 6 generating (6Z,11E)-octadecadienoate. In addition to Delta-6 activity, this enzyme exhibits Delta-8 activity with slight biases toward n-3 fatty acyl-CoA substrates. The sequence is that of Acyl-CoA 6-desaturase from Mus musculus (Mouse).